A 215-amino-acid polypeptide reads, in one-letter code: 3-isopropylmalate dehydratase small subunit (215 aa).

The protein belongs to the LeuD family. LeuD type 1 subfamily. Heterodimer of LeuC and LeuD.

The enzyme catalyses (2R,3S)-3-isopropylmalate = (2S)-2-isopropylmalate. It participates in amino-acid biosynthesis; L-leucine biosynthesis; L-leucine from 3-methyl-2-oxobutanoate: step 2/4. Functionally, catalyzes the isomerization between 2-isopropylmalate and 3-isopropylmalate, via the formation of 2-isopropylmaleate. This is 3-isopropylmalate dehydratase small subunit from Hahella chejuensis (strain KCTC 2396).